Reading from the N-terminus, the 957-residue chain is MDGRRQHPHWAWSLLAVAVVAGGAAPTEASDNSPTSNSLEGGADTTAYWWGEWTKWTACSRSCGGGVTSQERHCLQQRRKSVPGTGNRTCVGTSKRYQLCRVQECPPDGRSFREEQCVSFNSRVYDGRAYQWKPLYPDDYVHISSKPCDLHCSTVDGQRQLTVPARDGTSCKLTDLRGVCVSGKCEPIGCDGVLFSTHTLDKCGVCQGDGSSCTHVTGNYRKGNNHLGYSLVTHIPAGARDIQIVERKKSADVLALADEAGFYFFNGNYKVDSPKNFNIAGTVVKYRRPMDVYETGIEYIVAQGPTNQGLNVMVWNQNGKSPSITFEYTLLQSPHMHHLPPVYYSFSEAASQSTESTERQELDSARLLGFMQHNGSLYRQTSSERLGLNSQLFQPPAPEVELGPSRGQESNEVCKQASGGVCEGPPRGKGFQDHNATGRAFSADKDDREISAHFTSHELLSANTISDQLLGTGSESEEFSLNETMNSIFAQGAPRSSPAESLYVDYEENEGPAAYLINGSYLELSSDRINTSSEAPFPNTSASPPNLAGNRTHKARTRPKARKQGVSPADMYRWKLSSHEPCSATCTTGVMSTYAMCVRYDGVEVDDSYCDALTRPEPVHEFCAGRECQPRWETSSWSECSRTCGEGHQFRIVRCWKMLSPGFDSSVYSDLCEATEAVRPEERKTCRNPACGPQWEMSEWSECTAKCGERSVVTRDIRCSEDEKLCDPSTKPVGEKNCTGPPCDRQWTVSDWGPCSGSCGQGRTIRHVYCKTSDGRVVPESQCQTETKPLAIHPCGDKNCPAHWLAQDWERCNTTCGRGVKKRLVLCMELANGKPQIRSGPECGLARKPPEESTCFERPCFKWYTSPWSECTKTCGVGVRMRDVKCYQGTDIVRGCDPLVKPVGRQACDLQPCPTEPPDDSCQDQPGTNCALAIKVNLCGHWYYSKACCRSCRPPHS.

A signal peptide spans 1 to 29; the sequence is MDGRRQHPHWAWSLLAVAVVAGGAAPTEA. The region spanning 47–106 is the TSP type-1 1 domain; that stretch reads AYWWGEWTKWTACSRSCGGGVTSQERHCLQQRRKSVPGTGNRTCVGTSKRYQLCRVQECP. Cystine bridges form between cysteine 59/cysteine 100, cysteine 63/cysteine 105, and cysteine 74/cysteine 90. Residues asparagine 87, asparagine 374, asparagine 435, asparagine 482, asparagine 518, asparagine 530, asparagine 539, and asparagine 550 are each glycosylated (N-linked (GlcNAc...) asparagine). Positions 532–544 are enriched in polar residues; that stretch reads SSEAPFPNTSASP. The segment at 532-568 is disordered; the sequence is SSEAPFPNTSASPPNLAGNRTHKARTRPKARKQGVSP. Positions 551-563 are enriched in basic residues; the sequence is RTHKARTRPKARK. 6 consecutive TSP type-1 domains span residues 570 to 624, 628 to 692, 694 to 742, 743 to 801, 803 to 857, and 859 to 914; these read DMYR…EFCA, CQPR…PACG, QWEM…TGPP, CDRQ…KNCP, HWLA…TCFE, and PCFK…QPCP. Residue asparagine 737 is glycosylated (N-linked (GlcNAc...) asparagine). Asparagine 813 is a glycosylation site (N-linked (GlcNAc...) asparagine). The 39-residue stretch at 918 to 956 folds into the PLAC domain; that stretch reads PDDSCQDQPGTNCALAIKVNLCGHWYYSKACCRSCRPPH.

Interacts with LTBP1. In terms of processing, glycosylated. Can be O-fucosylated by POFUT2 on a serine or a threonine residue found within the consensus sequence C1-X(2)-(S/T)-C2-G of the TSP type-1 repeat domains where C1 and C2 are the first and second cysteine residue of the repeat, respectively. Fucosylated repeats can then be further glycosylated by the addition of a beta-1,3-glucose residue by the glucosyltransferase, B3GALTL. Fucosylation mediates the efficient secretion of ADAMTS family members. Can also be C-glycosylated with one or two mannose molecules on tryptophan residues within the consensus sequence W-X-X-W of the TPRs, and N-glycosylated. These other glycosylations can also facilitate secretion.

Its subcellular location is the secreted. This Mus musculus (Mouse) protein is ADAMTS-like protein 2 (Adamtsl2).